The following is a 390-amino-acid chain: Phosphopentomutase (390 aa).

Aspartate 11, aspartate 283, histidine 288, aspartate 324, histidine 325, and histidine 336 together coordinate Mn(2+).

The protein belongs to the phosphopentomutase family. The cofactor is Mn(2+).

Its subcellular location is the cytoplasm. It catalyses the reaction 2-deoxy-alpha-D-ribose 1-phosphate = 2-deoxy-D-ribose 5-phosphate. The enzyme catalyses alpha-D-ribose 1-phosphate = D-ribose 5-phosphate. It participates in carbohydrate degradation; 2-deoxy-D-ribose 1-phosphate degradation; D-glyceraldehyde 3-phosphate and acetaldehyde from 2-deoxy-alpha-D-ribose 1-phosphate: step 1/2. Its function is as follows. Isomerase that catalyzes the conversion of deoxy-ribose 1-phosphate (dRib-1-P) and ribose 1-phosphate (Rib-1-P) to deoxy-ribose 5-phosphate (dRib-5-P) and ribose 5-phosphate (Rib-5-P), respectively. The polypeptide is Phosphopentomutase (Clostridium novyi (strain NT)).